Consider the following 83-residue polypeptide: U25-theraphotoxin-Cg1b (83 aa).

The N-terminal stretch at 1–23 (MRFHTLLFLSFLLLVSCALICTA) is a signal peptide. Positions 24–48 (QHPGLEKSGMFHENVGKGQHIEEKR) are excised as a propeptide. 3 cysteine pairs are disulfide-bonded: Cys50-Cys66, Cys57-Cys71, and Cys65-Cys79.

Belongs to the neurotoxin 07 (Beta/delta-agtx) family. 03 (aga-4) subfamily. JZTX sub-subfamily. As to expression, expressed by the venom gland.

Its subcellular location is the secreted. Its function is as follows. Probable ion channel inhibitor. This is U25-theraphotoxin-Cg1b from Chilobrachys guangxiensis (Chinese earth tiger tarantula).